The following is a 638-amino-acid chain: Threonine--tRNA ligase (638 aa).

In terms of domain architecture, TGS spans 1 to 61; it reads MPVITLPDGS…DADAQLQIIT (61 aa). A catalytic region spans residues 243 to 534; sequence DHRKIGKALN…LTEEFAGFFP (292 aa). Residues cysteine 334, histidine 385, and histidine 511 each contribute to the Zn(2+) site.

This sequence belongs to the class-II aminoacyl-tRNA synthetase family. In terms of assembly, homodimer. Zn(2+) serves as cofactor.

The protein localises to the cytoplasm. The enzyme catalyses tRNA(Thr) + L-threonine + ATP = L-threonyl-tRNA(Thr) + AMP + diphosphate + H(+). Catalyzes the attachment of threonine to tRNA(Thr) in a two-step reaction: L-threonine is first activated by ATP to form Thr-AMP and then transferred to the acceptor end of tRNA(Thr). Also edits incorrectly charged L-seryl-tRNA(Thr). This Alteromonas mediterranea (strain DSM 17117 / CIP 110805 / LMG 28347 / Deep ecotype) protein is Threonine--tRNA ligase.